We begin with the raw amino-acid sequence, 452 residues long: Nuclear distribution protein nudF 2 (452 aa).

Residues Ala76–Arg101 adopt a coiled-coil conformation. WD repeat units lie at residues Ser123–Lys164, His166–Arg206, Gly210–Val250, Ser253–Ala292, Gly295–Leu355, Gly357–Lys396, and Ala401–Arg449.

It belongs to the WD repeat LIS1/nudF family. Self-associates. Interacts with nudE and dynein.

It is found in the cytoplasm. The protein resides in the cytoskeleton. The protein localises to the spindle pole. Its function is as follows. Positively regulates the activity of the minus-end directed microtubule motor protein dynein. May enhance dynein-mediated microtubule sliding by targeting dynein to the microtubule plus end. Required for nuclear migration during vegetative growth as well as development. Required for retrograde early endosome (EE) transport from the hyphal tip. Required for localization of dynein to the mitotic spindle poles. Recruits additional proteins to the dynein complex at SPBs. This is Nuclear distribution protein nudF 2 from Talaromyces marneffei (strain ATCC 18224 / CBS 334.59 / QM 7333) (Penicillium marneffei).